Here is a 93-residue protein sequence, read N- to C-terminus: Parbolysin P5 (93 aa).

Disulfide bonds link Cys16-Cys37, Cys22-Cys33, and Cys47-Cys60.

Belongs to the worm cytolysin family. As to expression, localized within the skin and proboscis and are most readily isolated from body mucus secretions.

The protein resides in the secreted. Cytolysin that shows hemolytic activity (on bovine erythrocytes, HC(50)=5.75 mg/ml). This hemolytic activity is completely inhibited by small unilamelar vesicles composed of PC/PG, PC/PI and PC/PS in 1:1 molar ratios (with at least 100 mg/ml concentration). The protein is Parbolysin P5 of Parborlasia corrugatus (Antarctic nemertean worm).